We begin with the raw amino-acid sequence, 385 residues long: Tryptophan--tRNA ligase (385 aa).

A 'HIGH' region motif is present at residues 82-90 (PSGPMHIGH). Residues 253-257 (KMSAS) carry the 'KMSKS' region motif.

It belongs to the class-I aminoacyl-tRNA synthetase family.

It is found in the cytoplasm. The catalysed reaction is tRNA(Trp) + L-tryptophan + ATP = L-tryptophyl-tRNA(Trp) + AMP + diphosphate + H(+). The protein is Tryptophan--tRNA ligase of Pyrococcus furiosus (strain ATCC 43587 / DSM 3638 / JCM 8422 / Vc1).